We begin with the raw amino-acid sequence, 1167 residues long: Outer membrane protein SlpA (1167 aa).

The N-terminal stretch at 1–22 (MKKSLIALTTALSFGLAAAQTA) is a signal peptide. The Periplasmic segment spans residues 23 to 254 (APVSAPQVPA…RIAALERNAF (232 aa)). Positions 29–92 (QVPALTDVPA…DQMRDGETPA (64 aa)) constitute an SLH domain. The beta stranded transmembrane segment at 255-268 (SVKPSLTIGYSVSR) threads the bilayer. Residues 269 to 377 (TSRNFDVDRL…RNGFGFNNLA (109 aa)) lie on the Extracellular side of the membrane. Residues D274, D276, R305, F308, D310, and E381 each contribute to the Cu(2+) site. Residues 378-403 (RYKEGSTDIGISLGFDTSGQFSQVTS) form a beta stranded membrane-spanning segment. At 404 to 416 (GTGGSLFSTAGRL) the chain is on the periplasmic side. The beta stranded transmembrane segment at 417–428 (QVNQIDLNFGLV) threads the bilayer. The Extracellular portion of the chain corresponds to 429 to 471 (TGLPSDAYVDTNGNGKKDDGEATGRGTYLGSGGTAAILRDPAG). The Fe(3+) site is built by D438, N442, K444, D446, and E449. The chain crosses the membrane as a beta stranded span at residues 472 to 490 (NVYRPVFFRFKNATTQFSV). Residues 491–494 (GNNP) are Periplasmic-facing. The beta stranded transmembrane segment at 495-500 (VIVTLG) threads the bilayer. The Extracellular portion of the chain corresponds to 501–519 (QQQKFYFSDYVFDNNYDGR). Cu(2+)-binding residues include D513 and N515. The chain crosses the membrane as a beta stranded span at residues 520 to 528 (GDGFTVTVD). Residues 529–540 (GSNVPVIGAWKP) lie on the Periplasmic side of the membrane. A beta stranded transmembrane segment spans residues 541-549 (QIKGVYGSR). Positions 549, 551, 553, and 559 each coordinate Cu(2+). At 550–561 (SGLDGTAEAGYG) the chain is on the extracellular side. Residues 562-571 (VYYRGVRAQI) traverse the membrane as a beta stranded segment. The Periplasmic portion of the chain corresponds to 572–577 (TPVGTL). Residues 578-588 (TAGIHYAQEGR) traverse the membrane as a beta stranded segment. Residues 589–601 (DMFGAAQNTTSTP) lie on the Extracellular side of the membrane. Residues 602–615 (SDVTTYGADLHGKA) form a beta stranded membrane-spanning segment. Topologically, residues 616 to 617 (FG) are periplasmic. Residues 618–630 (VELHSEYATSRVR) form a beta stranded membrane-spanning segment. Deinoxanthin is bound at residue S622. Residues 631–638 (PNTANAAV) are Extracellular-facing. The chain crosses the membrane as a beta stranded span at residues 639-649 (QTSNAFYARVA). The Periplasmic portion of the chain corresponds to 650–670 (TRKDNLAFDLNTPAAKFGNDT). The beta stranded transmembrane segment at 671–682 (FGVSLYDLNYRK) threads the bilayer. The Extracellular portion of the chain corresponds to 683-753 (IDAGYNNVAG…GTVVATNTKI (71 aa)). G716 serves as a coordination point for Cu(2+). Residues 754 to 766 (GQMGFGVKAAANL) traverse the membrane as a beta stranded segment. The Periplasmic portion of the chain corresponds to 767 to 768 (GP). Residues 769 to 779 (VAIGGYYDTST) traverse the membrane as a beta stranded segment. The Extracellular segment spans residues 780–788 (GANGDNANR). Residues 789–798 (MTEAGGSAKV) traverse the membrane as a beta stranded segment. The Periplasmic segment spans residues 799–802 (AYSI). Residues 803–814 (FSLRGTYNTLDS) traverse the membrane as a beta stranded segment. At 815-831 (NRPQIYRDAAGTQIIGD) the chain is on the extracellular side. Residues 832–843 (AKVRRYAVQADV) traverse the membrane as a beta stranded segment. Residues 844 to 848 (TPGLG) lie on the Periplasmic side of the membrane. Residues 849–860 (LFVGAYYRDVNV) form a beta stranded membrane-spanning segment. The Extracellular segment spans residues 861-931 (NGVRSTTDRG…DQSRTATCFT (71 aa)). The beta stranded transmembrane segment at 932–940 (SYGVEAGHA) threads the bilayer. At 941-949 (GDNANALVK) the chain is on the periplasmic side. The chain crosses the membrane as a beta stranded span at residues 950–960 (DLFFRVGYSRV). At 961 to 976 (YVPTTATATTGDFSGS) the chain is on the extracellular side. The beta stranded transmembrane segment at 977–988 (VTYGDARYDRKV) threads the bilayer. Over 989 to 990 (GV) the chain is Periplasmic. Residues 991–1002 (ANVRLAGSFSTT) traverse the membrane as a beta stranded segment. Residues 1003-1014 (NTQLDSRPAGTR) lie on the Extracellular side of the membrane. A beta stranded transmembrane segment spans residues 1015 to 1023 (GAVGLIVRT). Residues 1024 to 1032 (DPLENVPFR) are Periplasmic-facing. The beta stranded transmembrane segment at 1033 to 1046 (PQFNGQVGYYTADN) threads the bilayer. Residues 1047–1052 (RVAAGN) lie on the Extracellular side of the membrane. Residues 1053-1066 (YNANATKYGAGVVL) traverse the membrane as a beta stranded segment. Topologically, residues 1067-1073 (NDFLLPQ) are periplasmic. A beta stranded transmembrane segment spans residues 1074–1086 (TKIGVRYDGYMAQ). Residues 1087 to 1108 (NRQYTPFDGDGTQGYFSDANNN) are Extracellular-facing. Residues 1109–1122 (RRTNLNGVYVEGAY) traverse the membrane as a beta stranded segment. The Periplasmic segment spans residues 1123–1124 (QD). The chain crosses the membrane as a beta stranded span at residues 1125-1138 (LIFSYGTYTLSQKD). The Extracellular portion of the chain corresponds to 1139 to 1153 (LNGVEYGSGINNGQP). Residues 1154–1166 (ARGQTFKISYKVN) traverse the membrane as a beta stranded segment. A topological domain (periplasmic) is located at residue F1167.

As to quaternary structure, homotrimer. Part of a heterooligomeric complex resulting in the main assembly named S-layer deinoxanthin-binding complex (SDBC) which is composed of six different subunits, namely SlpA, DR_2310, DR_0505, DR_A0283, DR_A0282, and DR_A0281.

Its subcellular location is the cell envelope. It localises to the cell outer membrane. It catalyses the reaction L-arginine(in) = L-arginine(out). The catalysed reaction is L-lysine(in) = L-lysine(out). It carries out the reaction L-glutamate(out) = L-glutamate(in). Its function is as follows. Plays an important role in the structural organization and integrity of the cell envelope, bridging the outer membrane to the peptidoglyan layer. Is a highly abundant molecule in the D.radiodurans cell envelope but is not a fundamental component of the S-layer. Binds the carotenoid deinoxanthin, a strong protective antioxidant specific of this bacterium, and could be part of the first lane of defense against UV radiation, especially under desiccation. Appears to be a nonselective channel. Is able to transport charged amino acids such as Lys, Arg and Glu; the large dimension of the pore points toward the physiological importance of the SDBC complex in assisting and allowing the exchange of substances, including nutrients, with the surrounding environment. In Deinococcus radiodurans (strain ATCC 13939 / DSM 20539 / JCM 16871 / CCUG 27074 / LMG 4051 / NBRC 15346 / NCIMB 9279 / VKM B-1422 / R1), this protein is Outer membrane protein SlpA.